Reading from the N-terminus, the 412-residue chain is Homoserine dehydrogenase (412 aa).

NADP(+) contacts are provided by residues 9–16 and Lys105; that span reads LGIGTVGG. Position 190 (Glu190) interacts with substrate. Lys205 (proton donor) is an active-site residue. Residues 330–407 form the ACT domain; that stretch reads YLRLRAVDKP…ISGKVTRLRM (78 aa).

This sequence belongs to the homoserine dehydrogenase family.

The enzyme catalyses L-homoserine + NADP(+) = L-aspartate 4-semialdehyde + NADPH + H(+). It carries out the reaction L-homoserine + NAD(+) = L-aspartate 4-semialdehyde + NADH + H(+). Its pathway is amino-acid biosynthesis; L-methionine biosynthesis via de novo pathway; L-homoserine from L-aspartate: step 3/3. The protein operates within amino-acid biosynthesis; L-threonine biosynthesis; L-threonine from L-aspartate: step 3/5. The protein is Homoserine dehydrogenase (hom) of Methylobacillus glycogenes.